The sequence spans 232 residues: Large ribosomal subunit protein uL1 (232 aa).

It belongs to the universal ribosomal protein uL1 family. Part of the 50S ribosomal subunit.

Functionally, binds directly to 23S rRNA. The L1 stalk is quite mobile in the ribosome, and is involved in E site tRNA release. Its function is as follows. Protein L1 is also a translational repressor protein, it controls the translation of the L11 operon by binding to its mRNA. The chain is Large ribosomal subunit protein uL1 from Sinorhizobium medicae (strain WSM419) (Ensifer medicae).